The following is a 177-amino-acid chain: Large ribosomal subunit protein uL6 (177 aa).

The protein belongs to the universal ribosomal protein uL6 family. In terms of assembly, part of the 50S ribosomal subunit.

Its function is as follows. This protein binds to the 23S rRNA, and is important in its secondary structure. It is located near the subunit interface in the base of the L7/L12 stalk, and near the tRNA binding site of the peptidyltransferase center. This is Large ribosomal subunit protein uL6 from Aliivibrio salmonicida (strain LFI1238) (Vibrio salmonicida (strain LFI1238)).